Here is a 208-residue protein sequence, read N- to C-terminus: MLKKVIGILVIIAIISVGFFQKEAWLDAIKAGGMFSVLFSMLLIAADVFFPIVPFALIAALNGAVFGTANGIWITLTGSMLGTILLFFLARYSFRDWARKKVQAYPAIQSYEASFNKNAFTAVLLGRLIPVIPSLVMNVICGLSQVRWHVFFFASLIGKIPNIVVVTIAGANFTSNKLLSISIYGTYILIIMLVIYKKFPHLLKVPKK.

6 consecutive transmembrane segments (helical) span residues 5 to 25 (VIGI…KEAW), 41 to 61 (MLLI…IAAL), 69 to 89 (ANGI…LFFL), 123 to 143 (VLLG…ICGL), 150 to 170 (VFFF…TIAG), and 176 to 196 (NKLL…LVIY).

It is found in the cell membrane. This is an uncharacterized protein from Bacillus subtilis (strain 168).